We begin with the raw amino-acid sequence, 241 residues long: Interleukin-6 (241 aa).

The first 26 residues, 1–26 (MNSFTSALRPGPLGCSLALLLVVATA), serve as a signal peptide directing secretion. The interval 32–51 (PVREDSNTKASPDKTLTPPG) is disordered. Disulfide bonds link C72–C78 and C101–C111. N-linked (GlcNAc...) asparagine glycosylation is present at N108.

This sequence belongs to the IL-6 superfamily. In terms of assembly, component of a hexamer of two molecules each of IL6, IL6R and IL6ST; first binds to IL6R to associate with the signaling subunit IL6ST. Interacts with IL6R (via the N-terminal ectodomain); this interaction may be affected by IL6R-binding with SORL1, hence decreasing IL6 cis signaling. Interacts with SORL1 (via the N-terminal ectodomain); this interaction leads to IL6 internalization and lysosomal degradation. May form a trimeric complex with the soluble SORL1 ectodomain and soluble IL6R receptor; this interaction might stabilize circulating IL6, hence promoting IL6 trans signaling.

The protein resides in the secreted. Functionally, cytokine with a wide variety of biological functions in immunity, tissue regeneration, and metabolism. Binds to IL6R, then the complex associates to the signaling subunit IL6ST/gp130 to trigger the intracellular IL6-signaling pathway. The interaction with the membrane-bound IL6R and IL6ST stimulates 'classic signaling', whereas the binding of IL6 and soluble IL6R to IL6ST stimulates 'trans-signaling'. Alternatively, 'cluster signaling' occurs when membrane-bound IL6:IL6R complexes on transmitter cells activate IL6ST receptors on neighboring receiver cells. In terms of biological role, IL6 is a potent inducer of the acute phase response. Rapid production of IL6 contributes to host defense during infection and tissue injury, but excessive IL6 synthesis is involved in disease pathology. In the innate immune response, is synthesized by myeloid cells, such as macrophages and dendritic cells, upon recognition of pathogens through toll-like receptors (TLRs) at the site of infection or tissue injury. In the adaptive immune response, is required for the differentiation of B cells into immunoglobulin-secreting cells. Plays a major role in the differentiation of CD4(+) T cell subsets. Essential factor for the development of T follicular helper (Tfh) cells that are required for the induction of germinal-center formation. Required to drive naive CD4(+) T cells to the Th17 lineage. Also required for proliferation of myeloma cells and the survival of plasmablast cells. Its function is as follows. Acts as an essential factor in bone homeostasis and on vessels directly or indirectly by induction of VEGF, resulting in increased angiogenesis activity and vascular permeability. Induces, through 'trans-signaling' and synergistically with IL1B and TNF, the production of VEGF. Involved in metabolic controls, is discharged into the bloodstream after muscle contraction increasing lipolysis and improving insulin resistance. 'Trans-signaling' in central nervous system also regulates energy and glucose homeostasis. Mediates, through GLP-1, crosstalk between insulin-sensitive tissues, intestinal L cells and pancreatic islets to adapt to changes in insulin demand. Also acts as a myokine. Plays a protective role during liver injury, being required for maintenance of tissue regeneration. Also has a pivotal role in iron metabolism by regulating HAMP/hepcidin expression upon inflammation or bacterial infection. Through activation of IL6ST-YAP-NOTCH pathway, induces inflammation-induced epithelial regeneration. This Oryctolagus cuniculus (Rabbit) protein is Interleukin-6 (IL6).